Reading from the N-terminus, the 759-residue chain is Na(+)/H(+) exchanger beta (759 aa).

Over 1–14 (MPAFSCAFPGCRRD) the chain is Cytoplasmic. Residues 15–34 (LLVIVLVVFVGIGLPIEASA) form a helical membrane-spanning segment. Residues 35–75 (PAYQSHGTEGSHLTNITNTKKAFPVLAVNYEHVRKPFEIAL) are Extracellular-facing. A glycan (N-linked (GlcNAc...) asparagine) is linked at asparagine 49. A helical membrane pass occupies residues 76–95 (WILLALLMKLGFHLIPRLSA). Residues 96–97 (VV) are Cytoplasmic-facing. A helical transmembrane segment spans residues 98–117 (PESCLLIVVGLLVGGLIKVI). Topologically, residues 118 to 122 (GEEPP) are extracellular. A helical membrane pass occupies residues 123–142 (VLDSQLFFLCLLPPIILDAG). The Cytoplasmic segment spans residues 143-149 (YFLPIRP). The helical transmembrane segment at 150 to 169 (FTENVGTILVFAVIGTLWNA) threads the bilayer. Over 170–195 (FFMGGLLYALCQIESVGLSGVDLLAC) the chain is Extracellular. A helical transmembrane segment spans residues 196-214 (LLFGSIVSAVDPVAVLAVF). Residues 215–225 (EEIHINELVHI) lie on the Cytoplasmic side of the membrane. A helical transmembrane segment spans residues 226–244 (LVFGESLLNDAVTVVLYNL). Residues 245–261 (FEEFSKVGTVTVLDVFL) are Extracellular-facing. The helical transmembrane segment at 262–282 (GVVCFFVVSLGGVLVGAIYGF) threads the bilayer. At 283–311 (LAAFTSRFTSHTRVIEPLFVFLYSYMAYL) the chain is on the cytoplasmic side. Residues 312-330 (SSEMFHLSGIMALIACGVV) traverse the membrane as a helical segment. Over 331-352 (MRPYVEANISHKSYTTIKYFLK) the chain is Extracellular. Asparagine 338 is a glycosylation site (N-linked (GlcNAc...) asparagine). The chain crosses the membrane as a helical span at residues 353–372 (MWSSVSETLIFIFLGVSTVA). The Cytoplasmic portion of the chain corresponds to 373 to 376 (GPHA). Residues 377 to 398 (WNWTFVITTVILCLVSRVLGVI) traverse the membrane as a helical segment. Residues 399–446 (GLTFIINKFRIVKLTKKDQFIVAYGGLRGAIAFSLGYLLSNSHQMRNL) are Extracellular-facing. Residues 447–467 (FLTAIITVIFFTVFVQGMTIR) form a helical membrane-spanning segment. At 468–759 (PLVELLAVKK…KEDDDPFMSC (292 aa)) the chain is on the cytoplasmic side. Phosphoserine; by PKA is present on residues serine 641 and serine 648. Positions 681-759 (FPTVHFEQPS…KEDDDPFMSC (79 aa)) are disordered. Residues 707–719 (VPKRPSLKADIEG) show a composition bias toward basic and acidic residues.

This sequence belongs to the monovalent cation:proton antiporter 1 (CPA1) transporter (TC 2.A.36) family. Post-translationally, activated by cAMP, protein kinase A and protein kinase C.

The protein localises to the basolateral cell membrane. In terms of biological role, involved in pH regulation to eliminate acids generated by active metabolism or to counter adverse environmental conditions. Major proton extruding system driven by the inward sodium ion chemical gradient. The protein is Na(+)/H(+) exchanger beta of Oncorhynchus mykiss (Rainbow trout).